The sequence spans 244 residues: Uridylate kinase (244 aa).

Position 17–20 (Lys-17–Gly-20) interacts with ATP. Positions Gly-25–Gly-30 are involved in allosteric activation by GTP. Gly-59 is a UMP binding site. 2 residues coordinate ATP: Gly-60 and Arg-64. UMP-binding positions include Asp-80 and Val-141–Thr-148. Positions 168, 169, 174, and 177 each coordinate ATP.

It belongs to the UMP kinase family. As to quaternary structure, homohexamer.

It localises to the cytoplasm. It carries out the reaction UMP + ATP = UDP + ADP. It participates in pyrimidine metabolism; CTP biosynthesis via de novo pathway; UDP from UMP (UMPK route): step 1/1. Its activity is regulated as follows. Allosterically activated by GTP. Inhibited by UTP. Catalyzes the reversible phosphorylation of UMP to UDP. This chain is Uridylate kinase, found in Ehrlichia ruminantium (strain Welgevonden).